The primary structure comprises 292 residues: MTLQHTRRIVKSLFILFIIVVCIYLLPRVAINAFYYPDNKVYGPTPAEAESITFTAKDGTHLHGWFIPTAFGRPENAVATVIHVHGNAGNMSAHWPLVSWLPERNVNLFMFDYRGFGESEGTPSQEGLLNDTKSAIDYVRHRADVNPERLVLLGQSLGGNNVLAAVGHCVGCANMRYADQAGIRAIVLDSTFSSYSSIANQMIPGSGYLLDDRYSADRNIASVSPIPVLILHGTADHVIPWQDSEKLYALAREPKQKIFIPDGDHIDAFSGRYANLYRDAMINFIQTALSAK.

The helical transmembrane segment at 13-35 threads the bilayer; it reads LFILFIIVVCIYLLPRVAINAFY.

Belongs to the serine esterase family.

Its subcellular location is the membrane. This is an uncharacterized protein from Salmonella typhi.